Consider the following 642-residue polypeptide: Influenza virus NS1A-binding protein homolog (642 aa).

The BTB domain maps to 32 to 99 (CDVRLQVCGH…AYTAQLKADK (68 aa)). The 100-residue stretch at 134 to 233 (CISYRNFASC…YYSADHKLLD (100 aa)) folds into the BACK domain. 5 positions are modified to phosphoserine: serine 246, serine 277, serine 322, serine 336, and serine 338. Residues 257–281 (KPPRENGHKQISGSSTGCLSSPNAS) form a disordered region. Residues 265–281 (KQISGSSTGCLSSPNAS) show a composition bias toward polar residues. Kelch repeat units lie at residues 369 to 415 (KLIA…VLMG), 416 to 463 (QLYV…ALNG), 465 to 512 (LYIV…ELGG), 513 to 559 (YLYI…VLDG), 561 to 606 (LFVG…TVGN), and 608 to 642 (IYAV…IFQF).

It belongs to the BTB-kelch protein family. In terms of assembly, homodimer; through the BTB domain. Interacts with AHR/Aryl hydrocarbon receptor. Interacts (via BACK domain) with pre-mRNA-binding protein HNRNPK; the interaction is direct. Interacts (via BACK domain) with splicing factor PTBP1; the interaction is direct. Interacts (via Kelch repeats) with RNA polymerase POLR2A (via C-terminal domain). Interacts (via BACK domain) with splicing factor SNRPA; the interaction is indirect. Interacts (via Kelch repeats) with splicing factor SART1. Interacts (via BACK domain) with ALYREF; the interaction is indirect and likely plays a role in mRNA nuclear export. Interacts (via Kelch repeats) with KLHL20 (via Kelch repeats); this interaction blocks the assembly of Cul3-KLHL20 complex. As to expression, ubiquitous expression. In the heart, the highest expression is detected in the ventricles and the lowest in the atria. Expressed in dendrites and spines in neurons.

It localises to the cytoplasm. The protein localises to the cytoskeleton. Its subcellular location is the nucleus. In terms of biological role, involved in many cell functions, including pre-mRNA splicing, the aryl hydrocarbon receptor (AHR) pathway, F-actin organization and protein ubiquitination. Plays a role in the dynamic organization of the actin skeleton as a stabilizer of actin filaments by association with F-actin through Kelch repeats. Protects cells from cell death induced by actin destabilization. Functions as a modifier of the AHR/Aryl hydrocarbon receptor pathway increasing the concentration of AHR available to activate transcription. In addition, functions as a negative regulator of BCR(KLHL20) E3 ubiquitin ligase complex to prevent ubiquitin-mediated proteolysis of PML and DAPK1, two tumor suppressors. Inhibits pre-mRNA splicing (in vitro). May play a role in mRNA nuclear export. Functionally, may play a role in cell cycle progression in the nucleus. This chain is Influenza virus NS1A-binding protein homolog, found in Mus musculus (Mouse).